We begin with the raw amino-acid sequence, 369 residues long: 1-aminocyclopropane-1-carboxylate oxidase homolog 3 (369 aa).

A Fe2OG dioxygenase domain is found at Lys217–Gly318. Positions 241, 243, and 297 each coordinate Fe cation.

Belongs to the iron/ascorbate-dependent oxidoreductase family. Fe cation serves as cofactor.

The protein is 1-aminocyclopropane-1-carboxylate oxidase homolog 3 of Arabidopsis thaliana (Mouse-ear cress).